Consider the following 671-residue polypeptide: Heat shock transcription factor hsf-1 (671 aa).

Composition is skewed to low complexity over residues 1–17 and 38–52; these read MQPTGNQIQQNQQQQQQ and QQAPPNRPPRQNHQN. A disordered region spans residues 1–61; sequence MQPTGNQIQQ…NGAIGGKKSS (61 aa). Residues 89 to 196 are DNA-binding domain; sequence LPVFLIKLWN…LLSQIKRKQS (108 aa). Positions 206 to 240 form a coiled coil; sequence NEQTQQNLEVVMAEMRAMREKAKNMEDKMNKLTKE. Disordered stretches follow at residues 329-423, 437-493, 526-552, and 612-671; these read QEPF…PLTH, YQGA…VNNY, HHPTTSTSSTNADPHQNLYSPTLGLSP, and NAPE…PNLV. Over residues 370–386 the composition is skewed to polar residues; it reads GAQSSRYSDGGATSSRE. Residues 439-456 are compositionally biased toward low complexity; it reads GASPASGGPSTSSSAPSG. Polar residues-rich tracts occupy residues 474–493 and 528–552; these read ATRQMAQPQQDYSGGFVNNY and PTTSTSSTNADPHQNLYSPTLGLSP.

The protein belongs to the HSF family. As to quaternary structure, forms homodimers and homotrimers. Component of the DHIC (ddl-1-containing hsf-1 inhibitory complex), which contains at least ddl-1, ddl-2, hsb-1 and hsf-1. Within the complex, interacts with ddl-1. Formation of the DHIC may be dependent upon the Insulin/IGF-1-like signaling (IIS) mediated pathway. Post-translationally, phosphorylated. In terms of processing, sumoylated. Sumoylation may inhibit transcriptional activity in response to heat shock. As to expression, expressed in intestinal cells, body wall muscle cells, and hypodermal cells, as well as many neurons in the head and tail.

It is found in the nucleus. The protein localises to the cytoplasm. Functionally, functions as a stress-inducible and DNA-binding transcription factor, playing a central role in the transcriptional activation of the heat shock response (HSR), leading to the expression of a large class of molecular chaperones, heat shock proteins (HSPs), that protect cells from cellular insult damage. Upon exposure to heat and other stress stimuli, activates gene transcription through binding to site-specific heat shock elements (HSEs) present in the promoter regions of target genes, such as the HSPs. Binds to inverted 5'-NGAAN-3' pentamer DNA sequences in HSEs. Involved in positive modulation of expression of heat shock protein hsp-16.2 in response to heat shock; may act in concert with homeodomain-interacting protein kinase hpk-1. In response to heat shock or starvation, required for the modulation of lifespan, and protection against aberrant protein aggregation proteotoxicity; may act in parallel with the Insulin/IGF-1-like signaling (IIS) mediated pathway. Plays a role in modulating autophagy, in response to a moderate and short-term heat shock, also known as a hormetic heat shock. Involved in positive modulation of ascaroside pheromone biosynthesis in response to heat shock, perhaps by directly activating transcription of peroxisomal fatty acid beta-oxidation genes. Required in modulating the response to infection by either Gram-negative or Gram-positive bacteria, perhaps acting via regulation of expression of Hsp90/daf-21 and members of the small heat shock protein (HSP20) family. May play a role downstream of the daf-16/FOXO and daf-2 signaling pathway in response to bacterial pathogens. Modulates expression of multiple microRNA genes, in both heat shock-dependent and -independent manner. Independent of heat shock, required to modulate expression of genes involved in larval development, mainly distinct from HSPs; acts in concert with putative transcription factor efl-1/E2F, which may form part of a multiprotein DRM complex. Independent of heat shock, involved in promoting death of the linker cell, a male-specific cell which guides the elongation of the gonad; perhaps acting by modulating expression of ubiquitin-conjugating enzyme let-70. Plays a role in egg-laying. In Caenorhabditis elegans, this protein is Heat shock transcription factor hsf-1.